We begin with the raw amino-acid sequence, 151 residues long: IDDAAILIKINKELFQHGIFSSITVRVSEGRVLLTGTVDSPDKRLKAERVAWQQSEVKEVVNEIAVDKDEVTLKEVAIDSAISAQIKARMVAHAGIKSVNYSINTVGGVVYLMGIAQSQKELNSVIGISKRVKGVKQVISYVRLKHSKLRR.

BON domains follow at residues D2–K68 and I78–H146.

This is an uncharacterized protein from Anaplasma centrale.